The chain runs to 53 residues: UPF0391 membrane protein TM1040_2720 (53 aa).

The next 2 helical transmembrane spans lie at 4-24 and 29-48; these read WALA…GGIA and GIAQ…ALIL.

The protein belongs to the UPF0391 family.

It localises to the cell membrane. This Ruegeria sp. (strain TM1040) (Silicibacter sp.) protein is UPF0391 membrane protein TM1040_2720.